Here is a 407-residue protein sequence, read N- to C-terminus: Ran GTPase-activating protein 1 (407 aa).

11 LRR repeats span residues 11-39 (EEEQVYSISGKALKLTTSDDIKPYLEELA), 40-67 (ALKTCTKLDLSGNTIGTEASEALAKCIA), 68-101 (ENTQVRESLVEVNFADLYTSRLVDEVVDSLKFLL), 102-133 (PVLLKCPHLEIVNLSDNAFGLRTIELLEDYIA), 134-166 (HAVNIKHLILSNNGMGPFAGERIGKALFHLAQN), 167-197 (KKAASKPFLETFICGRNRLENGSAVYLALGL), 198-226 (KSHSEGLKVVKLYQNGIRPKGVATLIHYG), 227-256 (LQYLKNLEILDLQDNTFTKHASLILAKALP), 257-285 (TWKDSLFELNLNDCLLKTAGSDEVFKVFT), 286-315 (EVKFPNLHVLKFEYNEMAQETIEVSFLPAM), and 316-346 (EKGNLPELEKLEINGNRLDEDSDALDLLQSK). Residues 353–378 (DDFEEVDSEDEEGEDEEDEDEDEKLE) are disordered. Serine 360 carries the post-translational modification Phosphoserine.

Belongs to the RNA1 family.

Its subcellular location is the cytoplasm. Functionally, GTPase activator for the nuclear Ras-related regulatory protein GSP1 (Ran), converting it to the putatively inactive GDP-bound state. The chain is Ran GTPase-activating protein 1 (RNA1) from Saccharomyces cerevisiae (strain ATCC 204508 / S288c) (Baker's yeast).